The following is a 710-amino-acid chain: Putative transmembrane protein ORF710 (710 aa).

Positions 1-33 are cleaved as a signal peptide; the sequence is MKLDRKKKRLLLKTIFSIVILILPLTFLHPTNS. 3 consecutive transmembrane segments (helical) span residues 41–61, 76–95, and 689–709; these read VPIQ…TAPL, YGTL…VVWY, and VAIV…IFAI.

Its subcellular location is the host membrane. The polypeptide is Putative transmembrane protein ORF710 (Acidianus convivator (ATV)).